A 657-amino-acid chain; its full sequence is ABC1 family protein YPL109C, mitochondrial (657 aa).

The transit peptide at 1 to 15 (MSFLKFAYRNSWRYY) directs the protein to the mitochondrion.

It belongs to the protein kinase superfamily. ADCK protein kinase family.

The protein localises to the mitochondrion. This chain is ABC1 family protein YPL109C, mitochondrial, found in Saccharomyces cerevisiae (strain ATCC 204508 / S288c) (Baker's yeast).